The primary structure comprises 414 residues: Transforming growth factor beta-2 proprotein (414 aa).

An N-terminal signal peptide occupies residues 1-19; it reads MHYCVLSAFLILHLVTVAL. N-linked (GlcNAc...) asparagine glycosylation is found at Asn72, Asn140, and Asn241. 4 disulfide bridges follow: Cys309-Cys318, Cys317-Cys380, Cys346-Cys411, and Cys350-Cys413.

It belongs to the TGF-beta family. In terms of assembly, interacts with the serine proteases, HTRA1 and HTRA3. Interacts with ASPN. Interacts with MFAP5. As to quaternary structure, interacts with Transforming growth factor beta-2 (TGF-beta-2) chain; interaction is non-covalent and maintains (TGF-beta-2) in a latent state. Interacts with LRRC32/GARP; leading to regulate activation of TGF-beta-2. Interacts with NREP; the interaction results in a decrease in TGFB2 autoinduction. Transforming growth factor beta-2: Homodimer; disulfide-linked. Transforming growth factor beta-2: Interacts with TGF-beta receptors (TGFBR1 and TGFBR2), leading to signal transduction. In terms of processing, the precursor proprotein is cleaved in the Golgi apparatus to form Transforming growth factor beta-2 (TGF-beta-2) and Latency-associated peptide (LAP) chains, which remain non-covalently linked, rendering TGF-beta-2 inactive.

It localises to the secreted. It is found in the extracellular space. The protein resides in the extracellular matrix. Its function is as follows. Precursor of the Latency-associated peptide (LAP) and Transforming growth factor beta-2 (TGF-beta-2) chains, which constitute the regulatory and active subunit of TGF-beta-2, respectively. In terms of biological role, required to maintain the Transforming growth factor beta-2 (TGF-beta-2) chain in a latent state during storage in extracellular matrix. Associates non-covalently with TGF-beta-2 and regulates its activation via interaction with 'milieu molecules', such as LTBP1 and LRRC32/GARP, that control activation of TGF-beta-2. Multifunctional protein that regulates various processes such as angiogenesis and heart development. Activation into mature form follows different steps: following cleavage of the proprotein in the Golgi apparatus, Latency-associated peptide (LAP) and Transforming growth factor beta-2 (TGF-beta-2) chains remain non-covalently linked rendering TGF-beta-2 inactive during storage in extracellular matrix. At the same time, LAP chain interacts with 'milieu molecules', such as LTBP1 and LRRC32/GARP, that control activation of TGF-beta-2 and maintain it in a latent state during storage in extracellular milieus. Once activated following release of LAP, TGF-beta-2 acts by binding to TGF-beta receptors (TGFBR1 and TGFBR2), which transduce signal. The sequence is that of Transforming growth factor beta-2 proprotein (TGFB2) from Chlorocebus aethiops (Green monkey).